Consider the following 508-residue polypeptide: Ankyrin repeat domain-containing protein 34B (508 aa).

ANK repeat units lie at residues 9–38, 42–79, 83–113, and 117–146; these read TDGN…YINE, RGET…DPNI, SGKS…DLSL, and SGYS…AKGK. Residues 157–185 are disordered; it reads PSGRHTTQHHLNMPPADMDGSHPPATPSE. Serine 260 carries the phosphoserine modification. The residue at position 269 (threonine 269) is a Phosphothreonine. Serine 293 carries the post-translational modification Phosphoserine. Positions 361–370 are enriched in polar residues; the sequence is GANHYSSDSQ. The tract at residues 361 to 380 is disordered; the sequence is GANHYSSDSQLAEGVTPPTV.

This sequence belongs to the ANKRD34 family. Post-translationally, phosphorylated. In terms of tissue distribution, specifically and constitutively expressed in brain (at protein level).

Its subcellular location is the cytoplasm. The protein resides in the nucleus. The polypeptide is Ankyrin repeat domain-containing protein 34B (Ankrd34b) (Mus musculus (Mouse)).